A 349-amino-acid chain; its full sequence is 3'-5' exoribonuclease 1 (349 aa).

Basic and acidic residues-rich tracts occupy residues 1-10 and 22-35; these read MEDPQSKEPA and PRPE…RPSP. Residues 1-48 are disordered; it reads MEDPQSKEPAGEAVALALLESPRPEGGEEPPRPSPEETQQCKFDGQET. 2 positions are modified to phosphoserine: S59 and S62. In terms of domain architecture, SAP spans 76–110; it reads INRMSKEELRAKLSEFKLETRGVKDVLKKRLKNYY. The Exonuclease domain occupies 130–306; the sequence is ICIIDFEATC…DDSKNIARIA (177 aa). The Mg(2+) site is built by D134 and E136. Catalysis depends on E136, which acts as the Proton acceptor. The AMP site is built by E136 and A137. D234 is a binding site for Mg(2+). H293 serves as the catalytic Proton acceptor. H293 is a binding site for AMP. D298 lines the Mg(2+) pocket.

As to quaternary structure, identified in a histone pre-mRNA complex, at least composed of ERI1, LSM11, SLBP, SNRPB, SYNCRIP and YBX1. Interacts in a cooperative manner with SLBP to the mature 3'-end of histone mRNAs. Binds to 40S and 60S ribosomal subunits and to 80S assembled ribosomes. Found in a ternary complex with SLBP and the stem-loop structure of the 3'-end of histone mRNAs. Requires Mg(2+) as cofactor.

Its subcellular location is the cytoplasm. The protein resides in the nucleus. The protein localises to the nucleolus. The enzyme catalyses Exonucleolytic cleavage in the 3'- to 5'-direction to yield nucleoside 5'-phosphates.. Its activity is regulated as follows. Although it can bind simultaneously with SLBP to the 3'-end of histone mRNA, the presence of SLBP prevents the exonuclease activity. RNA exonuclease that binds to the 3'-end of histone mRNAs and degrades them, suggesting that it plays an essential role in histone mRNA decay after replication. A 2' and 3'-hydroxyl groups at the last nucleotide of the histone 3'-end is required for efficient 3'-end histone mRNA exonuclease activity and degradation of RNA substrates. Also able to degrade the 3'-overhangs of short interfering RNAs (siRNAs) in vitro, suggesting a possible role as regulator of RNA interference (RNAi). Required for binding the 5'-ACCCA-3' sequence present in stem-loop structure. Able to bind other mRNAs. Required for 5.8S rRNA 3'-end processing. Also binds to 5.8s ribosomal RNA. Binds with high affinity to the stem-loop structure of replication-dependent histone pre-mRNAs. In vitro, does not have sequence specificity. In vitro, has weak DNA exonuclease activity. In vitro, shows biphasic kinetics such that there is rapid hydrolysis of the last three unpaired RNA nucleotides in the 39 flanking sequence followed by a much slower cleavage through the stem that occurs over a longer incubation period in the order of hours. ERI1-mediated RNA metabolism plays a key role in chondrogenesis. The sequence is that of 3'-5' exoribonuclease 1 from Homo sapiens (Human).